Consider the following 224-residue polypeptide: 7-cyano-7-deazaguanine synthase (224 aa).

12-22 lines the ATP pocket; that stretch reads MSGGMDSTLGA. Positions 191, 199, 202, and 205 each coordinate Zn(2+).

It belongs to the QueC family. Zn(2+) is required as a cofactor.

The catalysed reaction is 7-carboxy-7-deazaguanine + NH4(+) + ATP = 7-cyano-7-deazaguanine + ADP + phosphate + H2O + H(+). It participates in purine metabolism; 7-cyano-7-deazaguanine biosynthesis. Its function is as follows. Catalyzes the ATP-dependent conversion of 7-carboxy-7-deazaguanine (CDG) to 7-cyano-7-deazaguanine (preQ(0)). The chain is 7-cyano-7-deazaguanine synthase from Sulfurimonas denitrificans (strain ATCC 33889 / DSM 1251) (Thiomicrospira denitrificans (strain ATCC 33889 / DSM 1251)).